Reading from the N-terminus, the 644-residue chain is uncharacterized protein (644 aa).

The interval 65–117 is disordered; that stretch reads DSDVETTGGGGRGSTTSTEDRIDEHDDAIEDDGVSNEEDENQDAEQEQEVDLN. Over residues 89-114 the composition is skewed to acidic residues; it reads HDDAIEDDGVSNEEDENQDAEQEQEV.

This is an uncharacterized protein from Arabidopsis thaliana (Mouse-ear cress).